The primary structure comprises 304 residues: MPQQLSPINIETKKAISDTRLKTLDIHYNESKPTTIQNTGKLVRINFKGGYISGGFLPNEYVLSTIHIYWGKEDDYGSNHLIDVYKYSGEINLVHWNKKKYSSYEEAKKHDDGIIIIAIFLQVSDHKNVYFQKIVNQLDSIRSANMSAPFDSVFYLDNLLPSTLDYFTYLGTTINHSADAAWIIFPTPINIHSDQLSKFRTLLSSSNHEGKPHYITENYRNPYKLNDDTQVYYSGEIIRAATTSPVRENYFMKWLSDLREACFSYYQKYIEGNKTFAIIAIVFVFILTAILFLMSQRYSREKQN.

Residues 1–235 enclose the Alpha-carbonic anhydrase domain; that stretch reads MPQQLSPINI…NDDTQVYYSG (235 aa). The Virion surface segment spans residues 1-275; it reads MPQQLSPINI…YQKYIEGNKT (275 aa). A helical transmembrane segment spans residues 276-294; sequence FAIIAIVFVFILTAILFLM. Topologically, residues 295 to 304 are intravirion; sequence SQRYSREKQN.

Belongs to the alpha-carbonic anhydrase family. In terms of assembly, homodimer; disulfide-linked. Apparently non-glycosylated.

It localises to the virion membrane. Its function is as follows. Binds to chondroitin sulfate on the cell surface to provide virion attachment to target cell. This Monkeypox virus (strain Zaire-96-I-16) (MPX) protein is Cell surface-binding protein OPG105 (OPG105).